The chain runs to 178 residues: Ribosome maturation factor RimM (178 aa).

The PRC barrel domain maps to 100–178 (DEGEFYWHQL…EIRVDWDADF (79 aa)).

Belongs to the RimM family. In terms of assembly, binds ribosomal protein uS19.

Its subcellular location is the cytoplasm. Functionally, an accessory protein needed during the final step in the assembly of 30S ribosomal subunit, possibly for assembly of the head region. Essential for efficient processing of 16S rRNA. May be needed both before and after RbfA during the maturation of 16S rRNA. It has affinity for free ribosomal 30S subunits but not for 70S ribosomes. In Azotobacter vinelandii (strain DJ / ATCC BAA-1303), this protein is Ribosome maturation factor RimM.